Here is a 341-residue protein sequence, read N- to C-terminus: Mediator of RNA polymerase II transcription subunit 18 (341 aa).

Residues 139-216 form a disordered region; that stretch reads KVMDKEKVQS…KEHSEGNASQ (78 aa). Over residues 163 to 211 the composition is skewed to basic and acidic residues; it reads EDKKENIKKEESGEEVKGSGEEVKGSGEEVKGSGEEAKKSGEEAKEHSE.

It belongs to the Mediator complex subunit 18 family. In terms of assembly, component of the Mediator complex.

The protein localises to the nucleus. Functionally, component of the Mediator complex, a coactivator involved in the regulated transcription of nearly all RNA polymerase II-dependent genes. Mediator functions as a bridge to convey information from gene-specific regulatory proteins to the basal RNA polymerase II transcription machinery. Mediator is recruited to promoters by direct interactions with regulatory proteins and serves as a scaffold for the assembly of a functional preinitiation complex with RNA polymerase II and the general transcription factors. The sequence is that of Mediator of RNA polymerase II transcription subunit 18 (SRB5) from Debaryomyces hansenii (strain ATCC 36239 / CBS 767 / BCRC 21394 / JCM 1990 / NBRC 0083 / IGC 2968) (Yeast).